The chain runs to 127 residues: Thioredoxin domain-containing protein 8 (127 aa).

Residues 2–127 enclose the Thioredoxin domain; it reads VQKIKSMREF…KLEEKIQELM (126 aa). An intrachain disulfide couples C32 to C35.

Belongs to the thioredoxin family. Testis-specific. Expressed in spermatozoa, sperm tail, elongated and round spermatids.

The protein localises to the cytoplasm. Its subcellular location is the golgi apparatus. May be required for post-translational modifications of proteins required for acrosomal biogenesis. May act by reducing disulfide bonds within the sperm. This chain is Thioredoxin domain-containing protein 8 (Txndc8), found in Rattus norvegicus (Rat).